Reading from the N-terminus, the 435-residue chain is Glutamyl-tRNA reductase (435 aa).

Residues 50–53 (TCNR), serine 110, 115–117 (ETQ), and glutamine 121 contribute to the substrate site. Cysteine 51 (nucleophile) is an active-site residue. 189–194 (GAGEMS) is an NADP(+) binding site.

The protein belongs to the glutamyl-tRNA reductase family. As to quaternary structure, homodimer.

The enzyme catalyses (S)-4-amino-5-oxopentanoate + tRNA(Glu) + NADP(+) = L-glutamyl-tRNA(Glu) + NADPH + H(+). The protein operates within porphyrin-containing compound metabolism; protoporphyrin-IX biosynthesis; 5-aminolevulinate from L-glutamyl-tRNA(Glu): step 1/2. In terms of biological role, catalyzes the NADPH-dependent reduction of glutamyl-tRNA(Glu) to glutamate 1-semialdehyde (GSA). This is Glutamyl-tRNA reductase from Campylobacter lari (strain RM2100 / D67 / ATCC BAA-1060).